Consider the following 326-residue polypeptide: Centriolar satellite-associated tubulin polyglutamylase complex regulator 1 (326 aa).

The required for interaction with PCM1 stretch occupies residues 1-111; it reads MLSPERLALP…HCLLQLLCPD (111 aa). Residues 1 to 225 are required for interaction with TPGS1, LRRC49, and TTLL1; it reads MLSPERLALP…SCPPPALVKE (225 aa).

This sequence belongs to the CSTPP1 family. In terms of assembly, interacts with PCM1. Interacts with TTLL1, TPGS1, TPGS2 and LRRC49; the interactions link CSTPP1 to the complex TPGC. Binds to alpha-tubulin.

It is found in the cytoplasm. Its subcellular location is the cytoskeleton. The protein resides in the microtubule organizing center. The protein localises to the centrosome. It localises to the centriolar satellite. Functionally, regulator of the tubulin polyglutamylase complex (TPGC) that controls cytoskeletal organization, nuclear shape, and cilium disassembly by balancing microtubule and actin assembly. Regulates the assembly and stability of the TPGC and thereby modulates polyglutamylation of the microtubule, which antagonizes MAP4 binding. The chain is Centriolar satellite-associated tubulin polyglutamylase complex regulator 1 (CSTPP1) from Bos taurus (Bovine).